We begin with the raw amino-acid sequence, 329 residues long: UPF0421 protein SH1063 (329 aa).

The next 5 membrane-spanning stretches (helical) occupy residues 25–45 (LFCL…IVTI), 60–80 (LPAT…FGDP), 87–107 (FSAL…GTTV), 108–128 (AVLT…FNFF), and 131–151 (LLTA…VLPP).

This sequence belongs to the UPF0421 family.

It is found in the cell membrane. This is UPF0421 protein SH1063 from Staphylococcus haemolyticus (strain JCSC1435).